We begin with the raw amino-acid sequence, 938 residues long: Isoleucine--tRNA ligase (938 aa).

The 'HIGH' region motif lies at 58–68 (PYANGSIHIGH). Lys183 is subject to N6-acetyllysine. An L-isoleucyl-5'-AMP-binding site is contributed by Glu561. Residues 602-606 (KMSKS) carry the 'KMSKS' region motif. Lys605 is a binding site for ATP. Zn(2+) is bound by residues Cys901, Cys904, Cys921, and Cys924.

It belongs to the class-I aminoacyl-tRNA synthetase family. IleS type 1 subfamily. As to quaternary structure, monomer. Requires Zn(2+) as cofactor.

Its subcellular location is the cytoplasm. The enzyme catalyses tRNA(Ile) + L-isoleucine + ATP = L-isoleucyl-tRNA(Ile) + AMP + diphosphate. Functionally, catalyzes the attachment of isoleucine to tRNA(Ile). As IleRS can inadvertently accommodate and process structurally similar amino acids such as valine, to avoid such errors it has two additional distinct tRNA(Ile)-dependent editing activities. One activity is designated as 'pretransfer' editing and involves the hydrolysis of activated Val-AMP. The other activity is designated 'posttransfer' editing and involves deacylation of mischarged Val-tRNA(Ile). The polypeptide is Isoleucine--tRNA ligase (Escherichia coli (strain 55989 / EAEC)).